The sequence spans 249 residues: Aquaporin (249 aa).

Topologically, residues methionine 1–serine 11 are cytoplasmic. The helical transmembrane segment at tyrosine 12 to glycine 32 threads the bilayer. Residues serine 33–serine 39 are Extracellular-facing. The helical transmembrane segment at alanine 40–phenylalanine 60 threads the bilayer. At cysteine 61–proline 83 the chain is on the cytoplasmic side. An NPA motif is present at residues asparagine 69–alanine 71. The helical transmembrane segment at phenylalanine 84 to alanine 104 threads the bilayer. The Extracellular portion of the chain corresponds to serine 105–arginine 133. Residues isoleucine 134–valine 154 form a helical membrane-spanning segment. The Cytoplasmic portion of the chain corresponds to asparagine 155 to lysine 179. Residues isoleucine 180–serine 200 form a helical membrane-spanning segment. The Extracellular segment spans residues serine 201–tryptophan 223. An NPG motif is present at residues asparagine 206–glycine 208. The chain crosses the membrane as a helical span at residues tryptophan 224–tyrosine 246. At lysine 247–phenylalanine 249 the chain is on the cytoplasmic side.

This sequence belongs to the MIP/aquaporin (TC 1.A.8) family.

It localises to the cell membrane. Water channel required to facilitate the transport of water across membranes. Involved in osmotolerance. The sequence is that of Aquaporin (AQP) from Vairimorpha ceranae (strain BRL01) (Microsporidian parasite).